Consider the following 313-residue polypeptide: Aspartate carbamoyltransferase catalytic subunit (313 aa).

2 residues coordinate carbamoyl phosphate: Arg-58 and Thr-59. L-aspartate is bound at residue Lys-86. Carbamoyl phosphate-binding residues include Arg-108, His-136, and Gln-139. Residues Arg-169 and Arg-223 each coordinate L-aspartate. Gly-264 and Pro-265 together coordinate carbamoyl phosphate.

This sequence belongs to the aspartate/ornithine carbamoyltransferase superfamily. ATCase family. As to quaternary structure, heterododecamer (2C3:3R2) of six catalytic PyrB chains organized as two trimers (C3), and six regulatory PyrI chains organized as three dimers (R2).

It carries out the reaction carbamoyl phosphate + L-aspartate = N-carbamoyl-L-aspartate + phosphate + H(+). It functions in the pathway pyrimidine metabolism; UMP biosynthesis via de novo pathway; (S)-dihydroorotate from bicarbonate: step 2/3. Its function is as follows. Catalyzes the condensation of carbamoyl phosphate and aspartate to form carbamoyl aspartate and inorganic phosphate, the committed step in the de novo pyrimidine nucleotide biosynthesis pathway. This Syntrophotalea carbinolica (strain DSM 2380 / NBRC 103641 / GraBd1) (Pelobacter carbinolicus) protein is Aspartate carbamoyltransferase catalytic subunit.